Here is a 371-residue protein sequence, read N- to C-terminus: Peptide chain release factor 2 (371 aa).

N5-methylglutamine is present on Q247.

It belongs to the prokaryotic/mitochondrial release factor family. Methylated by PrmC. Methylation increases the termination efficiency of RF2.

The protein localises to the cytoplasm. Functionally, peptide chain release factor 2 directs the termination of translation in response to the peptide chain termination codons UGA and UAA. The polypeptide is Peptide chain release factor 2 (Caulobacter vibrioides (strain ATCC 19089 / CIP 103742 / CB 15) (Caulobacter crescentus)).